A 379-amino-acid polypeptide reads, in one-letter code: Protein RecA (379 aa).

Residue 79-86 (GPESSGKT) participates in ATP binding.

Belongs to the RecA family.

Its subcellular location is the cytoplasm. Functionally, can catalyze the hydrolysis of ATP in the presence of single-stranded DNA, the ATP-dependent uptake of single-stranded DNA by duplex DNA, and the ATP-dependent hybridization of homologous single-stranded DNAs. It interacts with LexA causing its activation and leading to its autocatalytic cleavage. This is Protein RecA from Streptococcus uberis (strain ATCC BAA-854 / 0140J).